The following is a 486-amino-acid chain: Ammonium transporter 2 member 1 (486 aa).

The next 11 membrane-spanning stretches (helical) occupy residues Ala29–Val49, Ser57–Phe77, Leu127–Leu147, Leu161–Tyr181, Gly190–Gly210, Ile225–Gly245, Ile252–Trp272, Val285–Leu305, Trp309–Leu329, Leu343–Leu363, and Phe399–Ile419. Residues Arg454–Ala470 are compositionally biased toward basic and acidic residues. Residues Arg454–Arg473 form a disordered region.

It belongs to the ammonia transporter channel (TC 1.A.11.2) family. As to expression, expressed in roots and leaf blades and sheaths.

Its subcellular location is the cell membrane. Its function is as follows. Involved in ammonium transport. The protein is Ammonium transporter 2 member 1 (AMT2-1) of Oryza sativa subsp. japonica (Rice).